The following is a 143-amino-acid chain: Transcriptional regulator MraZ (143 aa).

SpoVT-AbrB domains lie at 5–47 (EYHH…PIEE) and 76–119 (AMES…SAER).

This sequence belongs to the MraZ family. In terms of assembly, forms oligomers.

It localises to the cytoplasm. The protein localises to the nucleoid. The polypeptide is Transcriptional regulator MraZ (Lactobacillus gasseri (strain ATCC 33323 / DSM 20243 / BCRC 14619 / CIP 102991 / JCM 1131 / KCTC 3163 / NCIMB 11718 / NCTC 13722 / AM63)).